The sequence spans 122 residues: Large ribosomal subunit protein bL12 (122 aa).

Belongs to the bacterial ribosomal protein bL12 family. In terms of assembly, homodimer. Part of the ribosomal stalk of the 50S ribosomal subunit. Forms a multimeric L10(L12)X complex, where L10 forms an elongated spine to which 2 to 4 L12 dimers bind in a sequential fashion. Binds GTP-bound translation factors.

Functionally, forms part of the ribosomal stalk which helps the ribosome interact with GTP-bound translation factors. Is thus essential for accurate translation. The chain is Large ribosomal subunit protein bL12 from Sodalis glossinidius (strain morsitans).